The chain runs to 416 residues: Thyroid hormone receptor alpha (416 aa).

Residues 1 to 13 (MEPMSNKQDSNSS) are compositionally biased toward polar residues. A disordered region spans residues 1–37 (MEPMSNKQDSNSSEGDEKGWPDVPKRKRKNSQCSMKS). Residues 1 to 58 (MEPMSNKQDSNSSEGDEKGWPDVPKRKRKNSQCSMKSMSALSVSVPGYIPSYLEKDEP) are modulating. The segment covering 15–24 (GDEKGWPDVP) has biased composition (basic and acidic residues). Zn(2+) is bound by residues Cys-59, Cys-62, Cys-76, Cys-79, Cys-97, Cys-103, Cys-113, and Cys-116. 2 NR C4-type zinc fingers span residues 59-79 (CVVC…CEGC) and 97-121 (CKYE…FKKC). The nuclear receptor DNA-binding region spans 59 to 133 (CVVCGDKATG…VGMAMDLVLD (75 aa)). Positions 169 to 413 (AEWELIRMAT…PPLFLEVFED (245 aa)) constitute an NR LBD domain. Arg-234 contributes to the 3,3',5-triiodo-L-thyronine binding site.

This sequence belongs to the nuclear hormone receptor family. NR1 subfamily.

It is found in the nucleus. Its function is as follows. Nuclear hormone receptor that can act as a repressor or activator of transcription. High affinity receptor for thyroid hormones, including triiodothyronine and thyroxine. In Hippoglossus hippoglossus (Atlantic halibut), this protein is Thyroid hormone receptor alpha (thra).